A 371-amino-acid chain; its full sequence is Protein-glutamate methylesterase/protein-glutamine glutaminase 3 (371 aa).

One can recognise a Response regulatory domain in the interval 5 to 120 (RVVVIDDSAY…SEEILTIRED (116 aa)). At Asp56 the chain carries 4-aspartylphosphate. Positions 174 to 362 (PAGRLEVVAI…LDRMSREIIQ (189 aa)) constitute a CheB-type methylesterase domain. Residues Ser186, His213, and Asp309 contribute to the active site.

The protein belongs to the CheB family. Post-translationally, phosphorylated by CheA. Phosphorylation of the N-terminal regulatory domain activates the methylesterase activity.

Its subcellular location is the cytoplasm. The catalysed reaction is [protein]-L-glutamate 5-O-methyl ester + H2O = L-glutamyl-[protein] + methanol + H(+). The enzyme catalyses L-glutaminyl-[protein] + H2O = L-glutamyl-[protein] + NH4(+). Functionally, involved in chemotaxis. Part of a chemotaxis signal transduction system that modulates chemotaxis in response to various stimuli. Catalyzes the demethylation of specific methylglutamate residues introduced into the chemoreceptors (methyl-accepting chemotaxis proteins or MCP) by CheR. Also mediates the irreversible deamidation of specific glutamine residues to glutamic acid. This Geobacter sulfurreducens (strain ATCC 51573 / DSM 12127 / PCA) protein is Protein-glutamate methylesterase/protein-glutamine glutaminase 3.